A 464-amino-acid chain; its full sequence is Gamma-aminobutyric acid receptor subunit alpha-5 (464 aa).

A signal peptide spans 1-25; it reads MDNGMLSRFIMTKTLLVFCISMTLS. Over 26 to 260 the chain is Extracellular; sequence SHFGFSQMPT…FHLKRKIGYF (235 aa). A glycan (N-linked (GlcNAc...) asparagine) is linked at Asn-45. Residue Arg-101 participates in 4-aminobutanoate binding. Asn-145 is a glycosylation site (N-linked (GlcNAc...) asparagine). A 4-aminobutanoate-binding site is contributed by Thr-164. Cys-173 and Cys-187 form a disulfide bridge. Residues Asn-207 and Asn-236 are each glycosylated (N-linked (GlcNAc...) asparagine). The next 3 helical transmembrane spans lie at 261-281, 287-308, and 319-340; these read VIQT…SFWL, PART…ISAR, and AMDW…EFAT. At 341–429 the chain is on the cytoplasmic side; the sequence is VNYFTKRGWA…TYNSISKIDK (89 aa). A Glycyl lysine isopeptide (Lys-Gly) (interchain with G-Cter in ubiquitin) cross-link involves residue Lys-355. A disordered region spans residues 382–414; the sequence is KLTHPPNIPKEQLPGGTGNAVGTASIRASEEKT. A helical transmembrane segment spans residues 430-450; that stretch reads MSRIVFPILFGTFNLVYWATY.

The protein belongs to the ligand-gated ion channel (TC 1.A.9) family. Gamma-aminobutyric acid receptor (TC 1.A.9.5) subfamily. GABRA5 sub-subfamily. Heteropentamer, formed by a combination of alpha (GABRA1-6), beta (GABRB1-3), gamma (GABRG1-3), delta (GABRD), epsilon (GABRE), rho (GABRR1-3), pi (GABRP) and theta (GABRQ) chains, each subunit exhibiting distinct physiological and pharmacological properties. In terms of tissue distribution, expressed in brain areas such as cerebral cortex, hippocampal formation and olfactory bulb granular layer.

It localises to the postsynaptic cell membrane. The protein localises to the cell membrane. It catalyses the reaction chloride(in) = chloride(out). With respect to regulation, allosterically potentiated by alphaxalone. Allosterically inhibited by pregnenolone sulfate. Inhibited by zinc and lanthanum. Its function is as follows. Alpha subunit of the heteropentameric ligand-gated chloride channel gated by gamma-aminobutyric acid (GABA), a major inhibitory neurotransmitter in the brain. GABA-gated chloride channels, also named GABA(A) receptors (GABAAR), consist of five subunits arranged around a central pore and contain GABA active binding site(s) located at the alpha and beta subunit interface(s). When activated by GABA, GABAARs selectively allow the flow of chloride anions across the cell membrane down their electrochemical gradient. GABAARs containing alpha-5/GABRA5 subunits are mainly extrasynaptic and contribute to the tonic GABAergic inhibition in the hippocampus. Extrasynaptic alpha-5-containing GABAARs in CA1 pyramidal neurons play a role in learning and memory processes. In Rattus norvegicus (Rat), this protein is Gamma-aminobutyric acid receptor subunit alpha-5.